The chain runs to 724 residues: Degenerin mec-10 (724 aa).

The span at 1-15 (MNRNPRMSKFQPNPR) shows a compositional bias: polar residues. The interval 1–22 (MNRNPRMSKFQPNPRSRSRFQD) is disordered. The Cytoplasmic portion of the chain corresponds to 1 to 122 (MNRNPRMSKF…GQAPNSLYRA (122 aa)). A helical membrane pass occupies residues 123-143 (AWVFLLLICAIQFINQAVAVI). Residues 144 to 684 (QKYQKMDKIT…FGGHLGLWSG (541 aa)) are Extracellular-facing. The tract at residues 229–265 (KRGAGEKGTFEPANSACECDEEDGSNECEERSTEKPS) is disordered. Positions 246 to 255 (ECDEEDGSNE) are enriched in acidic residues. Residues 256–265 (CEERSTEKPS) show a composition bias toward basic and acidic residues. N-linked (GlcNAc...) asparagine glycosylation is found at Asn293, Asn369, Asn463, Asn605, and Asn624. Residues 685 to 705 (VSVMTCCEFVCLAFELIYMAI) traverse the membrane as a helical segment. Residues 706–724 (AHHINQQRIRRRENAANEY) lie on the Cytoplasmic side of the membrane.

The protein belongs to the amiloride-sensitive sodium channel (TC 1.A.6) family. As to quaternary structure, component of a non-voltage-gated amiloride-sensitive cation channel complex (also called the degenerin channel complex) composed of at least the mec-2, mec-4, mec-6 and mec-10 subunits; the complex mediates mechanotransduction in touch cells. Interacts with mec-4 and mec-6.

It is found in the cell membrane. Its function is as follows. Subunit of an amiloride-sensitive cation channel (degenerin channel complex) permeable for sodium, potassium, lithium and N-methylglucamine, and required for mechanosensory transduction (touch sensitivity). Negatively regulates the turning step of male mating behavior. This is Degenerin mec-10 from Caenorhabditis elegans.